The sequence spans 556 residues: WD repeat-containing protein srw1 (556 aa).

The disordered stretch occupies residues 1 to 80 (MDEFDGFTRP…NEGDRFIPSR (80 aa)). Positions 12–37 (SSNSSANRNSNNSMNRVENNNSNSDS) are enriched in low complexity. Residues 43–55 (SRGDAHTRMRQGF) are compositionally biased toward basic and acidic residues. At Ser-62 the chain carries Phosphoserine. Basic and acidic residues predominate over residues 69 to 78 (RTNEGDRFIP). At Thr-98 the chain carries Phosphothreonine. A compositionally biased stretch (polar residues) spans 126-146 (TFNNSPIATPNTTIGVSTPRT). A disordered region spans residues 126–173 (TFNNSPIATPNTTIGVSTPRTDSGIDDIELTQRTPPSSSHTSSSILQN). Residues 159-169 (TPPSSSHTSSS) show a composition bias toward low complexity. Phosphothreonine is present on Thr-177. A phosphoserine mark is found at Ser-187 and Ser-214. WD repeat units lie at residues 246 to 285 (GLAG…VTVM), 289 to 328 (YPTD…KTRT), 331 to 368 (GHTE…HYFR), 372 to 411 (AHRQ…PLYS), 414 to 456 (NHIA…MLHN), 458 to 499 (DTGS…RVGT), and 502 to 541 (GHTD…SKHS).

The protein belongs to the WD repeat CDC20/Fizzy family. Post-translationally, phosphorylated by cdc2-cdc13-CDK complex. This targets srw1 for proteolysis which in turn promotes cdc13 turnover. Dephosphorylated during G1 arrest.

It localises to the nucleus. In terms of biological role, has a role in cell differentiation and cell cycling by negatively regulating cig2 and cdc12-associated cdc2. Down-regulates the level of cdc13, particularly in a nitrogen deprived environment. Regulator of cell cycle G1 phase progression. Prevents onset of mitosis during the pre-Start G1 period. Required for degradation of cdc13 mitotic cyclin B during G1 arrest but not during mitotic exit. The sequence is that of WD repeat-containing protein srw1 (srw1) from Schizosaccharomyces pombe (strain 972 / ATCC 24843) (Fission yeast).